The following is a 165-amino-acid chain: SsrA-binding protein (165 aa).

It belongs to the SmpB family.

It is found in the cytoplasm. Its function is as follows. Required for rescue of stalled ribosomes mediated by trans-translation. Binds to transfer-messenger RNA (tmRNA), required for stable association of tmRNA with ribosomes. tmRNA and SmpB together mimic tRNA shape, replacing the anticodon stem-loop with SmpB. tmRNA is encoded by the ssrA gene; the 2 termini fold to resemble tRNA(Ala) and it encodes a 'tag peptide', a short internal open reading frame. During trans-translation Ala-aminoacylated tmRNA acts like a tRNA, entering the A-site of stalled ribosomes, displacing the stalled mRNA. The ribosome then switches to translate the ORF on the tmRNA; the nascent peptide is terminated with the 'tag peptide' encoded by the tmRNA and targeted for degradation. The ribosome is freed to recommence translation, which seems to be the essential function of trans-translation. In Parvibaculum lavamentivorans (strain DS-1 / DSM 13023 / NCIMB 13966), this protein is SsrA-binding protein.